Reading from the N-terminus, the 38-residue chain is MKVRCFCVVLLVSGTLCLHADRSYPGNSVPVTLNVQSR.

At 1–20 the chain is embedded in the membrane; it reads MKVRCFCVVLLVSGTLCLHA.

This sequence belongs to the TimP toxin family.

It is found in the cell inner membrane. Functionally, toxic component of a probable type I toxin-antitoxin (TA) system. Neutralized by sRNA antitoxin TimR which binds to the 5' UTR of timP mRNA and inhibits translation. When TimP is expressed from its promoter in the absence of antitoxin leads to mild cell stress; overexpression in situ is toxic to the cell and causes membrane leakage. The antitoxin gene is encoded immediately upstream and transcribed divergently from the toxin gene; antitoxin RNA is less stable than timP mRNA. This chain is Toxic protein TimP, found in Salmonella typhimurium (strain SL1344).